Here is a 97-residue protein sequence, read N- to C-terminus: Aspartyl/glutamyl-tRNA(Asn/Gln) amidotransferase subunit C (97 aa).

The protein belongs to the GatC family. Heterotrimer of A, B and C subunits.

The enzyme catalyses L-glutamyl-tRNA(Gln) + L-glutamine + ATP + H2O = L-glutaminyl-tRNA(Gln) + L-glutamate + ADP + phosphate + H(+). It carries out the reaction L-aspartyl-tRNA(Asn) + L-glutamine + ATP + H2O = L-asparaginyl-tRNA(Asn) + L-glutamate + ADP + phosphate + 2 H(+). Its function is as follows. Allows the formation of correctly charged Asn-tRNA(Asn) or Gln-tRNA(Gln) through the transamidation of misacylated Asp-tRNA(Asn) or Glu-tRNA(Gln) in organisms which lack either or both of asparaginyl-tRNA or glutaminyl-tRNA synthetases. The reaction takes place in the presence of glutamine and ATP through an activated phospho-Asp-tRNA(Asn) or phospho-Glu-tRNA(Gln). The polypeptide is Aspartyl/glutamyl-tRNA(Asn/Gln) amidotransferase subunit C (Prochlorococcus marinus (strain MIT 9303)).